The primary structure comprises 247 residues: UPF0309 protein LMOf2365_2617 (247 aa).

Residues 31 to 214 form the SIS domain; sequence VAESIENDGV…ETMVNDNFTP (184 aa).

This sequence belongs to the UPF0309 family.

This Listeria monocytogenes serotype 4b (strain F2365) protein is UPF0309 protein LMOf2365_2617.